The sequence spans 310 residues: AA9 family lytic polysaccharide monooxygenase A (310 aa).

Residues 1–21 (MPSTKVAALSAVLALASTVAG) form the signal peptide. H22 and H107 together coordinate Cu(2+). 2 cysteine pairs are disulfide-bonded: C77-C199 and C118-C122. N-linked (GlcNAc...) asparagine glycosylation is found at N121 and N159. H185 lines the O2 pocket. Position 196 (Y196) interacts with Cu(2+).

This sequence belongs to the polysaccharide monooxygenase AA9 family. Requires Cu(2+) as cofactor.

The protein localises to the secreted. The enzyme catalyses [(1-&gt;4)-beta-D-glucosyl]n+m + reduced acceptor + O2 = 4-dehydro-beta-D-glucosyl-[(1-&gt;4)-beta-D-glucosyl]n-1 + [(1-&gt;4)-beta-D-glucosyl]m + acceptor + H2O.. Functionally, lytic polysaccharide monooxygenase (LPMO) that depolymerizes crystalline and amorphous polysaccharides via the oxidation of scissile alpha- or beta-(1-4)-glycosidic bonds, yielding C1, C4 as well as C6 oxidation products. Catalysis by LPMOs requires the reduction of the active-site copper from Cu(II) to Cu(I) by a reducing agent and H(2)O(2) or O(2) as a cosubstrate. Active on cellulose, but not on xylan, starch, or chitin. The sequence is that of AA9 family lytic polysaccharide monooxygenase A from Talaromyces pinophilus (Penicillium pinophilum).